Reading from the N-terminus, the 217-residue chain is Small ribosomal subunit protein uS3 (217 aa).

One can recognise a KH type-2 domain in the interval I40–R110.

It belongs to the universal ribosomal protein uS3 family. Part of the 30S ribosomal subunit. Forms a tight complex with proteins S10 and S14.

Functionally, binds the lower part of the 30S subunit head. Binds mRNA in the 70S ribosome, positioning it for translation. The protein is Small ribosomal subunit protein uS3 of Rickettsia africae (strain ESF-5).